Consider the following 89-residue polypeptide: Large ribosomal subunit protein bL28 (89 aa).

It belongs to the bacterial ribosomal protein bL28 family.

This is Large ribosomal subunit protein bL28 from Chlamydia felis (strain Fe/C-56) (Chlamydophila felis).